Here is a 281-residue protein sequence, read N- to C-terminus: Protein ZAR1-like 1.L (281 aa).

A 3CxxC-type zinc finger spans residues 183–267; the sequence is QKYGFFHCKN…QELCGRCKGQ (85 aa).

Belongs to the ZAR1 family. Component of a cytoplasmic ribonucleoprotein complex together with eif4enif1/4E-T and cpeb1. In terms of tissue distribution, expressed in oocytes.

It is found in the cytoplasm. The protein resides in the cytoplasmic ribonucleoprotein granule. MRNA-binding protein required for maternal mRNA storage, translation and degradation during oocyte maturation. Controls timing of meiosis during oogenesis. Probably promotes formation of some phase-separated membraneless compartment that stores maternal mRNAs in oocytes: acts by undergoing liquid-liquid phase separation upon binding to maternal mRNAs. Binds to the 3'-UTR of maternal mRNAs, inhibiting their translation. This Xenopus laevis (African clawed frog) protein is Protein ZAR1-like 1.L.